The primary structure comprises 372 residues: Methenyltetrahydrofolate synthase domain-containing protein (372 aa).

The span at 246–258 (KQAGKDVTLRDEP) shows a compositional bias: basic and acidic residues. The segment at 246–289 (KQAGKDVTLRDEPGSQQPAPGPIRRPQDRPQTGSRGGSRSPLQG) is disordered. Positions 296-369 (ATVCVGNLPF…NALRVSLGQQ (74 aa)) constitute an RRM domain.

In Mus musculus (Mouse), this protein is Methenyltetrahydrofolate synthase domain-containing protein (Mthfsd).